The following is a 61-amino-acid chain: Photosystem II reaction center X protein (61 aa).

A helical membrane pass occupies residues 26 to 46 (IGSFIAAALLIVIPATAFLIF).

Belongs to the PsbX family. Type 2 subfamily. As to quaternary structure, PSII consists of a core antenna complex that captures photons, and an electron transfer chain that converts photonic excitation into a charge separation. PSII forms dimeric complexes.

The protein resides in the cellular thylakoid membrane. Involved in the binding and/or turnover of quinones at the Q(B) site of Photosystem II. This chain is Photosystem II reaction center X protein, found in Prochlorococcus marinus (strain MIT 9301).